We begin with the raw amino-acid sequence, 338 residues long: NADPH dehydrogenase (338 aa).

22 to 25 provides a ligand contact to FMN; that stretch reads SPMC. Y27 is a binding site for substrate. FMN-binding residues include A59 and Q101. 163 to 166 contacts substrate; it reads HAAH. Residues R214 and 306-307 each bind FMN; that span reads GR.

It belongs to the NADH:flavin oxidoreductase/NADH oxidase family. NamA subfamily. In terms of assembly, homotetramer. It depends on FMN as a cofactor.

It carries out the reaction A + NADPH + H(+) = AH2 + NADP(+). Catalyzes the reduction of the double bond of an array of alpha,beta-unsaturated aldehydes and ketones. It also reduces the nitro group of nitroester and nitroaromatic compounds. It could have a role in detoxification processes. The chain is NADPH dehydrogenase from Listeria monocytogenes serovar 1/2a (strain ATCC BAA-679 / EGD-e).